A 21-amino-acid polypeptide reads, in one-letter code: Mast cell protease 3 (21 aa).

In terms of domain architecture, Peptidase S1 spans 1–21 (IIGGVESRPHSRPYMATLEIT). The disordered stretch occupies residues 1–21 (IIGGVESRPHSRPYMATLEIT).

The protein belongs to the peptidase S1 family. Granzyme subfamily.

In terms of biological role, thrombin inactivating protease. Displays chymotrypsin-like substrate specificity. This chain is Mast cell protease 3 (Mcpt3), found in Mus musculus (Mouse).